The chain runs to 261 residues: Cytochrome c oxidase subunit 3 (261 aa).

Residues 1 to 15 (MTHQTHAYHMVNPSP) lie on the Mitochondrial matrix side of the membrane. A helical membrane pass occupies residues 16–34 (WPLTGALSALLMTSGLIMW). Topologically, residues 35–40 (FHFNST) are mitochondrial intermembrane. Residues 41–66 (TLLMLGLTTNMLTMYQWWRDIIREST) form a helical membrane-spanning segment. The Mitochondrial matrix portion of the chain corresponds to 67–72 (FQGHHT). Residues 73 to 105 (PNVQKGLRYGMILFIISEVLFFTGFFWAFYHSS) traverse the membrane as a helical segment. The Mitochondrial intermembrane portion of the chain corresponds to 106–128 (LAPTPELGGCWPPTGIHPLNPLE). Residues 129–152 (VPLLNTSVLLASGVSITWAHHSLM) traverse the membrane as a helical segment. The Mitochondrial matrix segment spans residues 153–155 (EGN). A helical transmembrane segment spans residues 156–183 (RNHMLQALFITIALGVYFTLLQASEYYE). At 184–190 (APFTISD) the chain is on the mitochondrial intermembrane side. The helical transmembrane segment at 191 to 223 (GVYGSTFFVATGFHGLHVIIGSTFLIVCFFRQL) threads the bilayer. Residues 224–232 (KFHFTSSHH) are Mitochondrial matrix-facing. A helical membrane pass occupies residues 233 to 256 (FGFEAAAWYWHFVDVVWLFLYVSI). The Mitochondrial intermembrane segment spans residues 257–261 (YWWGS).

Belongs to the cytochrome c oxidase subunit 3 family. In terms of assembly, component of the cytochrome c oxidase (complex IV, CIV), a multisubunit enzyme composed of 14 subunits. The complex is composed of a catalytic core of 3 subunits MT-CO1, MT-CO2 and MT-CO3, encoded in the mitochondrial DNA, and 11 supernumerary subunits COX4I, COX5A, COX5B, COX6A, COX6B, COX6C, COX7A, COX7B, COX7C, COX8 and NDUFA4, which are encoded in the nuclear genome. The complex exists as a monomer or a dimer and forms supercomplexes (SCs) in the inner mitochondrial membrane with NADH-ubiquinone oxidoreductase (complex I, CI) and ubiquinol-cytochrome c oxidoreductase (cytochrome b-c1 complex, complex III, CIII), resulting in different assemblies (supercomplex SCI(1)III(2)IV(1) and megacomplex MCI(2)III(2)IV(2)).

The protein localises to the mitochondrion inner membrane. The enzyme catalyses 4 Fe(II)-[cytochrome c] + O2 + 8 H(+)(in) = 4 Fe(III)-[cytochrome c] + 2 H2O + 4 H(+)(out). Component of the cytochrome c oxidase, the last enzyme in the mitochondrial electron transport chain which drives oxidative phosphorylation. The respiratory chain contains 3 multisubunit complexes succinate dehydrogenase (complex II, CII), ubiquinol-cytochrome c oxidoreductase (cytochrome b-c1 complex, complex III, CIII) and cytochrome c oxidase (complex IV, CIV), that cooperate to transfer electrons derived from NADH and succinate to molecular oxygen, creating an electrochemical gradient over the inner membrane that drives transmembrane transport and the ATP synthase. Cytochrome c oxidase is the component of the respiratory chain that catalyzes the reduction of oxygen to water. Electrons originating from reduced cytochrome c in the intermembrane space (IMS) are transferred via the dinuclear copper A center (CU(A)) of subunit 2 and heme A of subunit 1 to the active site in subunit 1, a binuclear center (BNC) formed by heme A3 and copper B (CU(B)). The BNC reduces molecular oxygen to 2 water molecules using 4 electrons from cytochrome c in the IMS and 4 protons from the mitochondrial matrix. In Litocranius walleri (Gerenuk), this protein is Cytochrome c oxidase subunit 3 (MT-CO3).